The primary structure comprises 396 residues: Phosphoglycerate kinase (396 aa).

Substrate-binding positions include 21–23 (DFN), R36, 59–62 (HLGK), R119, and R156. ATP contacts are provided by residues K206, E325, and 352-355 (GGDS).

The protein belongs to the phosphoglycerate kinase family. In terms of assembly, monomer.

The protein localises to the cytoplasm. It catalyses the reaction (2R)-3-phosphoglycerate + ATP = (2R)-3-phospho-glyceroyl phosphate + ADP. It functions in the pathway carbohydrate degradation; glycolysis; pyruvate from D-glyceraldehyde 3-phosphate: step 2/5. In Staphylococcus saprophyticus subsp. saprophyticus (strain ATCC 15305 / DSM 20229 / NCIMB 8711 / NCTC 7292 / S-41), this protein is Phosphoglycerate kinase.